We begin with the raw amino-acid sequence, 403 residues long: Phosphoglycerate kinase (403 aa).

Residues 21 to 23 (DFN), arginine 36, 59 to 62 (HLGR), arginine 119, and arginine 159 each bind substrate. ATP contacts are provided by residues lysine 214, glycine 301, glutamate 332, and 359 to 362 (GGDS).

Belongs to the phosphoglycerate kinase family. In terms of assembly, monomer.

It is found in the cytoplasm. It catalyses the reaction (2R)-3-phosphoglycerate + ATP = (2R)-3-phospho-glyceroyl phosphate + ADP. It participates in carbohydrate degradation; glycolysis; pyruvate from D-glyceraldehyde 3-phosphate: step 2/5. The polypeptide is Phosphoglycerate kinase (Lactobacillus delbrueckii subsp. lactis).